A 625-amino-acid polypeptide reads, in one-letter code: RalA-binding protein 1 (625 aa).

Composition is skewed to basic and acidic residues over residues 1-11 (MDFDSPEEKEF) and 20-60 (ADAK…KDRG). Residues 1–172 (MDFDSPEEKE…SKQLSQQQDD (172 aa)) form a disordered region. Phosphoserine occurs at positions 68 and 69. The span at 94-157 (KSKEKREKSR…EKDKKADKKD (64 aa)) shows a compositional bias: basic and acidic residues. Positions 191–385 (VSLATERSRC…PLTSTSPKLP (195 aa)) constitute a Rho-GAP domain. The segment at 443-500 (QEKTAEEVDNSSSAPPAVASEDTTDSKPAGTPAVSTNNSISQEEPKTDTLTPKDAPND) is disordered. A compositionally biased stretch (polar residues) spans 475-484 (AVSTNNSISQ).

In terms of assembly, interacts with CycB and numb.

In terms of biological role, participates in receptor endocytosis during interphase, is also involved in mitotic processes when endocytosis is switched off. The protein is RalA-binding protein 1 of Drosophila melanogaster (Fruit fly).